Reading from the N-terminus, the 355-residue chain is UDP-N-acetylglucosamine--N-acetylmuramyl-(pentapeptide) pyrophosphoryl-undecaprenol N-acetylglucosamine transferase (355 aa).

UDP-N-acetyl-alpha-D-glucosamine-binding residues include arginine 166, serine 196, and glutamine 290.

This sequence belongs to the glycosyltransferase 28 family. MurG subfamily.

Its subcellular location is the cell membrane. It carries out the reaction Mur2Ac(oyl-L-Ala-gamma-D-Glu-L-Lys-D-Ala-D-Ala)-di-trans,octa-cis-undecaprenyl diphosphate + UDP-N-acetyl-alpha-D-glucosamine = beta-D-GlcNAc-(1-&gt;4)-Mur2Ac(oyl-L-Ala-gamma-D-Glu-L-Lys-D-Ala-D-Ala)-di-trans,octa-cis-undecaprenyl diphosphate + UDP + H(+). Its pathway is cell wall biogenesis; peptidoglycan biosynthesis. Cell wall formation. Catalyzes the transfer of a GlcNAc subunit on undecaprenyl-pyrophosphoryl-MurNAc-pentapeptide (lipid intermediate I) to form undecaprenyl-pyrophosphoryl-MurNAc-(pentapeptide)GlcNAc (lipid intermediate II). This is UDP-N-acetylglucosamine--N-acetylmuramyl-(pentapeptide) pyrophosphoryl-undecaprenol N-acetylglucosamine transferase from Staphylococcus haemolyticus (strain JCSC1435).